Consider the following 170-residue polypeptide: Cyclic pyranopterin monophosphate synthase (170 aa).

Substrate is bound by residues 89-91 (LCH) and 125-126 (ME). Asp-140 is an active-site residue.

It belongs to the MoaC family. As to quaternary structure, homohexamer; trimer of dimers.

It carries out the reaction (8S)-3',8-cyclo-7,8-dihydroguanosine 5'-triphosphate = cyclic pyranopterin phosphate + diphosphate. It participates in cofactor biosynthesis; molybdopterin biosynthesis. Catalyzes the conversion of (8S)-3',8-cyclo-7,8-dihydroguanosine 5'-triphosphate to cyclic pyranopterin monophosphate (cPMP). This chain is Cyclic pyranopterin monophosphate synthase, found in Streptomyces coelicolor (strain ATCC BAA-471 / A3(2) / M145).